The sequence spans 338 residues: Replication factor C small subunit (338 aa).

53–60 (GPPGVGKT) lines the ATP pocket.

Belongs to the activator 1 small subunits family. RfcS subfamily. Heteromultimer composed of small subunits (RfcS) and large subunits (RfcL).

Its function is as follows. Part of the RFC clamp loader complex which loads the PCNA sliding clamp onto DNA. The protein is Replication factor C small subunit of Methanosarcina acetivorans (strain ATCC 35395 / DSM 2834 / JCM 12185 / C2A).